The following is a 147-amino-acid chain: CLAVATA3/ESR (CLE)-related protein 4C (147 aa).

Residues 1–21 form the signal peptide; sequence MATNTMLCLFVISVVLALAFA. Positions 21–83 are required for secretion from the host cytoplasm to the host apoplasm; the sequence is ATNKKGDEEP…SNQLPNNNWM (63 aa). The N-linked (GlcNAc...) asparagine glycan is linked to Asn32. Disordered stretches follow at residues 57-86 and 116-147; these read GADA…MAPP and RKTG…PIHH. A compositionally biased stretch (basic and acidic residues) spans 125–137; the sequence is HHEETTLEQEKRV. The CLE motif lies at 136 to 147; that stretch reads RVAGAGPDPIHH.

It belongs to the CLV3/ESR signal peptide family. As to expression, highly expressed exclusively within the dorsal esophageal gland cell during syncytium formation in host plants.

The protein resides in the secreted. Its subcellular location is the host cytoplasm. It is found in the host extracellular space. It localises to the extracellular space. The protein localises to the apoplast. Its function is as follows. Mimics host plant CLE extracellular signal peptides that regulate cell fate. May play a role in the differentiation or division of feeding cells (syncytia) induced in plant roots during infection. This Globodera rostochiensis (Golden nematode worm) protein is CLAVATA3/ESR (CLE)-related protein 4C (CLE-4C).